The chain runs to 184 residues: MDTKKIEAAVAQIIEAVGEDGSREGLQETPQRIAKMYQEIFAGLGETAEEHLAKSFEIIDNNMVVEKDIFFHSMCEHHFLPFYGKVHIAYVPNGRVAGLSKLARTVEVYAKKPQIQERLTVEIAEALMDYLGAQGALVWVEAEHMCMNMRGVRKPGTATVTTAARGVLATDKDLKNEAYKLMGH.

Positions 75, 78, and 146 each coordinate Zn(2+).

The protein belongs to the GTP cyclohydrolase I family. In terms of assembly, toroid-shaped homodecamer, composed of two pentamers of five dimers.

It catalyses the reaction GTP + H2O = 7,8-dihydroneopterin 3'-triphosphate + formate + H(+). The protein operates within cofactor biosynthesis; 7,8-dihydroneopterin triphosphate biosynthesis; 7,8-dihydroneopterin triphosphate from GTP: step 1/1. The sequence is that of GTP cyclohydrolase 1 from Streptococcus sanguinis (strain SK36).